We begin with the raw amino-acid sequence, 264 residues long: Thymidylate synthase (264 aa).

Residue Arg-21 participates in dUMP binding. His-51 contacts (6R)-5,10-methylene-5,6,7,8-tetrahydrofolate. 126 to 127 (RR) contacts dUMP. Catalysis depends on Cys-146, which acts as the Nucleophile. DUMP is bound by residues 166–169 (RSCD), Asn-177, and 207–209 (HLY). Asp-169 is a binding site for (6R)-5,10-methylene-5,6,7,8-tetrahydrofolate. Ser-263 lines the (6R)-5,10-methylene-5,6,7,8-tetrahydrofolate pocket.

This sequence belongs to the thymidylate synthase family. Bacterial-type ThyA subfamily. In terms of assembly, homodimer.

It localises to the cytoplasm. The catalysed reaction is dUMP + (6R)-5,10-methylene-5,6,7,8-tetrahydrofolate = 7,8-dihydrofolate + dTMP. The protein operates within pyrimidine metabolism; dTTP biosynthesis. Functionally, catalyzes the reductive methylation of 2'-deoxyuridine-5'-monophosphate (dUMP) to 2'-deoxythymidine-5'-monophosphate (dTMP) while utilizing 5,10-methylenetetrahydrofolate (mTHF) as the methyl donor and reductant in the reaction, yielding dihydrofolate (DHF) as a by-product. This enzymatic reaction provides an intracellular de novo source of dTMP, an essential precursor for DNA biosynthesis. The chain is Thymidylate synthase from Buchnera aphidicola subsp. Acyrthosiphon pisum (strain APS) (Acyrthosiphon pisum symbiotic bacterium).